The sequence spans 700 residues: ATP-dependent DNA helicase UvrD2 (700 aa).

Positions 10–301 (AGLDDQQREA…VRLERDYRST (292 aa)) constitute a UvrD-like helicase ATP-binding domain. Residues 34 to 39 (GTGKTR) and Arg-299 contribute to the ATP site. The 252-residue stretch at 302-553 (PQVVSLANRV…LYVGITRARV (252 aa)) folds into the UvrD-like helicase C-terminal domain. The interval 565–595 (PGGRQSRKPSRFLNGIAPQTRADPVPGTSRR) is disordered. One can recognise an HRDC domain in the interval 626-700 (ADVDEELLLQ…DVLQLVRGRT (75 aa)).

The protein belongs to the helicase family. UvrD subfamily. Requires Mg(2+) as cofactor.

The enzyme catalyses Couples ATP hydrolysis with the unwinding of duplex DNA by translocating in the 3'-5' direction.. The catalysed reaction is ATP + H2O = ADP + phosphate + H(+). Functionally, DNA-dependent ATPase, stimulated equally by ss- and dsDNA. Has both ATPase and helicase activities. The protein is ATP-dependent DNA helicase UvrD2 (uvrD2) of Mycobacterium bovis (strain ATCC BAA-935 / AF2122/97).